The sequence spans 874 residues: AP-1 complex subunit gamma-1 (874 aa).

In terms of domain architecture, GAE spans 761–873; the sequence is TVAKSHTVYT…QDQTDWAQPS (113 aa).

This sequence belongs to the adaptor complexes large subunit family. In terms of assembly, adaptor protein complex 1 (AP-1) is a heterotetramer composed of two large adaptins (gamma-type subunit APL4 and beta-type subunit APL2), a medium adaptin (mu-type subunit APM1) and a small adaptin (sigma-type subunit APS1). AP-1 interacts with clathrin.

It is found in the cytoplasmic vesicle. Its subcellular location is the clathrin-coated vesicle membrane. The protein localises to the golgi apparatus. Its function is as follows. Adaptins are components of the adaptor complexes which link clathrin to receptors in coated vesicles. Clathrin-associated protein complexes are believed to interact with the cytoplasmic tails of membrane proteins, leading to their selection and concentration. The AP-1 complex interacts directly with clathrin. Required for apical growth extension. This is AP-1 complex subunit gamma-1 (APL4) from Mycosarcoma maydis (Corn smut fungus).